The primary structure comprises 1263 residues: Condensin complex subunit dpy-26 (1263 aa).

The span at 1–10 (MDVPSSSNVT) shows a compositional bias: polar residues. Residues 1–29 (MDVPSSSNVTGRRKRQVLDDDEDDGFRST) are disordered. Residues 691–725 (NEQMDETEVEERNEQDVQRELEDIALAADEVAELM) are a coiled coil. 2 disordered regions span residues 1098–1118 (YQAA…GTAN) and 1225–1263 (FSNL…EMEE). Residues 1106 to 1118 (NNQPTTSTYGTAN) are compositionally biased toward polar residues. Residues 1230 to 1241 (RRPKAVPVRKGR) are compositionally biased toward basic residues.

As to quaternary structure, component of the condensin I complex, which contains the mix-1/SMC2 and smc-4/SMC4 heterodimer, and three non SMC subunits that probably regulate the complex: dpy-26, capg-1 and dpy-28. Within the complex, interacts with dpy-28, mix-1, smc-4 and capg-1. Component of the dosage compensation complex, which consists of the condensin I-like components mix-1/SMC2 and dpy-27/SMC4, and the three non SMC subunits dpy-26, capg-1 and dpy-28. Within the complex, interacts with dpy-27, dpy-28, mix-1 and capg-1. The interaction with dpy-27 is required for dpy-27 protein stability. Interacts with smcl-1. Expressed in embryos and in somatic and germline tissues in L4 stage larvae (at protein level).

The protein resides in the nucleus. It is found in the chromosome. Required for both chromosome condensation and segregation and for X-chromosome dosage compensation depending on its binding partners. Member of the condensin I complex, a complex required for conversion of interphase chromatin into mitotic-like condense chromosomes and for proper chromosome segregation in mitosis and meiosis. As a member of the condensin I complex, further controls the crossover number and distribution in meiosis by restricting double strand break formation, probably by influencing higher-order chromosome structure. Plays a role in robust cytokinesis upon presence of chromatin obstructions. Also a member of the condensin I-like dosage compensation complex that associates specifically with hermaphrodite X chromosomes to reduce their gene transcription during interphase, possibly through chromatin reorganization. As a member of the dosage compensation complex, also binds to regulatory regions of the autosomal her-1 gene, required for male development, possibly contributing to its repression in hermaphrodites. The protein is Condensin complex subunit dpy-26 of Caenorhabditis elegans.